The chain runs to 357 residues: 3-dehydroquinate synthase (357 aa).

NAD(+)-binding positions include 104 to 108, 128 to 129, K141, and 168 to 171; these read GVVGD, TT, and FLET. Zn(2+) is bound by residues E183, H243, and H260.

This sequence belongs to the sugar phosphate cyclases superfamily. Dehydroquinate synthase family. NAD(+) is required as a cofactor. The cofactor is Co(2+). Zn(2+) serves as cofactor.

Its subcellular location is the cytoplasm. It catalyses the reaction 7-phospho-2-dehydro-3-deoxy-D-arabino-heptonate = 3-dehydroquinate + phosphate. Its pathway is metabolic intermediate biosynthesis; chorismate biosynthesis; chorismate from D-erythrose 4-phosphate and phosphoenolpyruvate: step 2/7. In terms of biological role, catalyzes the conversion of 3-deoxy-D-arabino-heptulosonate 7-phosphate (DAHP) to dehydroquinate (DHQ). The protein is 3-dehydroquinate synthase of Streptococcus pyogenes serotype M6 (strain ATCC BAA-946 / MGAS10394).